A 197-amino-acid polypeptide reads, in one-letter code: Small ribosomal subunit protein uS7 (197 aa).

It belongs to the universal ribosomal protein uS7 family.

The sequence is that of Small ribosomal subunit protein uS7 (RPS5) from Cicer arietinum (Chickpea).